We begin with the raw amino-acid sequence, 138 residues long: Protein FAM136A (138 aa).

Ala2 is modified (N-acetylalanine). Residues Thr124 and Thr126 each carry the phosphothreonine modification.

Belongs to the FAM136 family.

This chain is Protein FAM136A (Fam136a), found in Mus musculus (Mouse).